The chain runs to 728 residues: tRNA (guanine(27)-N(2))-dimethyltransferase (728 aa).

Over residues 1 to 10 (MENMAEEELL) the composition is skewed to acidic residues. Disordered stretches follow at residues 1-78 (MENM…SKRH) and 98-118 (DVDSASSLNSDNPGTENSQTC). Thr-23 bears the Phosphothreonine mark. Pro residues predominate over residues 23 to 33 (TPAPDSAPVPA). Positions 34–46 (PAADTALDSAPTP) are enriched in low complexity. Residues 47–61 (DSDPAPALAPAPAPA) are compositionally biased toward pro residues. Residue Ser-63 is modified to Phosphoserine. A compositionally biased stretch (polar residues) spans 101–118 (SASSLNSDNPGTENSQTC). The Nucleolar localization signal signature appears at 132–136 (HKLRR). The C2H2-type zinc finger occupies 181–203 (YHCIICSATITRRTDMLGHVKRH). The Trm1 methyltransferase domain occupies 224–683 (EILKETDTDI…APLMQFKSIL (460 aa)). Arg-257, Asp-304, Asp-352, and Ala-353 together coordinate S-adenosyl-L-methionine. Cys-483, Cys-486, Cys-508, and Cys-510 together coordinate Zn(2+). Residue Lys-580 forms a Glycyl lysine isopeptide (Lys-Gly) (interchain with G-Cter in SUMO2) linkage. Position 607 is a phosphoserine (Ser-607). A disordered region spans residues 693–728 (GAQSEGQMPPAAEDTVTDRVEMSVSDKAEASGCRRW). The segment covering 708 to 721 (VTDRVEMSVSDKAE) has biased composition (basic and acidic residues).

Belongs to the class I-like SAM-binding methyltransferase superfamily. Trm1 family. In terms of tissue distribution, expressed in various neuronal structures during embryonic development, including spinal ganglia, trigeminal nerve and ganglion, olfactory and nasopharyngeal epithelium, nuclei of the metencephalon, thalamus and medulla oblongata. Also expressed in lung, esophagus, epiglottis, ependyma, vertebral column, spinal cord and brown adipose tissue. Expression persists in the adult brain with dynamically changing patterns in cortex and cerebellum.

It is found in the nucleus. The protein localises to the nucleolus. It catalyses the reaction guanosine(27) in tRNA(Tyr) + 2 S-adenosyl-L-methionine = N(2)-dimethylguanosine(27) in tRNA(Tyr) + 2 S-adenosyl-L-homocysteine + 2 H(+). Specifically dimethylates a single guanine residue at position 27 of tRNA(Tyr) using S-adenosyl-L-methionine as donor of the methyl groups. Dimethylation at position 27 of tRNA(Tyr) is required for efficient translation of tyrosine codons. Also required to maintain 3-(3-amino-3-carboxypropyl)uridine (acp3U) in the D-loop of several cytoplasmic tRNAs. May play a role in motor coordination and exploratory behavior. This is tRNA (guanine(27)-N(2))-dimethyltransferase from Mus musculus (Mouse).